The chain runs to 215 residues: Somatotropin (215 aa).

An N-terminal signal peptide occupies residues methionine 1–alanine 25. Histidine 44 contacts Zn(2+). Cysteines 77 and 188 form a disulfide. Serine 130 carries the phosphoserine modification. Glutamate 197 serves as a coordination point for Zn(2+). A disulfide bond links cysteine 205 and cysteine 213.

It belongs to the somatotropin/prolactin family.

Its subcellular location is the secreted. In terms of biological role, plays an important role in growth control. Its major role in stimulating body growth is to stimulate the liver and other tissues to secrete IGF1. It stimulates both the differentiation and proliferation of myoblasts. It also stimulates amino acid uptake and protein synthesis in muscle and other tissues. The sequence is that of Somatotropin (GH1) from Trichosurus vulpecula (Brush-tailed possum).